Here is a 418-residue protein sequence, read N- to C-terminus: Putative competence-damage inducible protein (418 aa).

The protein belongs to the CinA family.

The sequence is that of Putative competence-damage inducible protein from Streptococcus pneumoniae serotype 19F (strain G54).